Reading from the N-terminus, the 273-residue chain is MGKLLRKPLNERIAPGVTLVQDINQANSPLSYVGFRLIEMEKGAIYQEELTELECCIVALTGKITVSEGNDIFPEIGTRANVFEKIPTDSVFISGGRAFQVKADTEKARVALCYSPANQDLPTTLIKASDNSIEQRGKYQNKRLVHNILPDVSEVASSLLVVEVYTNGGNFSSYPPHKHDRDNLPAESLLEESYYHEINPEQGFIFQRVYTDERTLDETMAVEHQNAVIVPEGYHPVGVPDGYDSYYLNVMAGPNRVWKFHNDPDHEWILERD.

The protein belongs to the isomerase IolB family.

It carries out the reaction 5-deoxy-D-glucuronate = 5-dehydro-2-deoxy-D-gluconate. The protein operates within polyol metabolism; myo-inositol degradation into acetyl-CoA; acetyl-CoA from myo-inositol: step 4/7. In terms of biological role, involved in the isomerization of 5-deoxy-glucuronate (5DG) to 5-dehydro-2-deoxy-D-gluconate (DKG or 2-deoxy-5-keto-D-gluconate). This Listeria monocytogenes serotype 4a (strain HCC23) protein is 5-deoxy-glucuronate isomerase.